The sequence spans 60 residues: Large ribosomal subunit protein bL32 (60 aa).

Disordered stretches follow at residues 1 to 22 and 34 to 60; these read MAVQ…HNAL and GETH…KSEA. Basic residues predominate over residues 9–19; sequence SPSKRGMHRSH.

It belongs to the bacterial ribosomal protein bL32 family.

The sequence is that of Large ribosomal subunit protein bL32 from Variovorax paradoxus (strain S110).